Reading from the N-terminus, the 393-residue chain is NAD(P)H-quinone oxidoreductase subunit H, chloroplastic (393 aa).

It belongs to the complex I 49 kDa subunit family. NDH is composed of at least 16 different subunits, 5 of which are encoded in the nucleus.

The protein resides in the plastid. It localises to the chloroplast thylakoid membrane. The catalysed reaction is a plastoquinone + NADH + (n+1) H(+)(in) = a plastoquinol + NAD(+) + n H(+)(out). The enzyme catalyses a plastoquinone + NADPH + (n+1) H(+)(in) = a plastoquinol + NADP(+) + n H(+)(out). In terms of biological role, NDH shuttles electrons from NAD(P)H:plastoquinone, via FMN and iron-sulfur (Fe-S) centers, to quinones in the photosynthetic chain and possibly in a chloroplast respiratory chain. The immediate electron acceptor for the enzyme in this species is believed to be plastoquinone. Couples the redox reaction to proton translocation, and thus conserves the redox energy in a proton gradient. This is NAD(P)H-quinone oxidoreductase subunit H, chloroplastic from Spinacia oleracea (Spinach).